We begin with the raw amino-acid sequence, 1086 residues long: NAD(P) transhydrogenase, mitochondrial (1086 aa).

The transit peptide at Met1–Trp43 directs the protein to the mitochondrion. The Mitochondrial matrix segment spans residues Cys44–Thr474. An N6-acetyllysine modification is found at Lys70. An N6-succinyllysine modification is found at Lys117. An NAD(+)-binding site is contributed by Arg182–Thr184. Residue Lys224 is modified to N6-succinyllysine. NAD(+) is bound by residues Val237, Asp257–Arg259, and Gly287. At Lys294 the chain carries N6-succinyllysine. 2 residues coordinate NAD(+): Glu300 and Leu319. Position 331 is an N6-succinyllysine (Lys331). The residue at position 397 (Lys397) is an N6-acetyllysine. The next 4 helical transmembrane spans lie at Thr475–Ala493, Met501–Pro521, Leu527–Met546, and Ser558–Thr578. Topologically, residues Gln579–Asn595 are mitochondrial matrix. The next 5 membrane-spanning stretches (helical) occupy residues Tyr596–Gly616, Ile622–Gly642, Leu646–Leu666, Leu672–Ala691, and Leu702–Tyr722. Residues Ile723–Lys739 are Cytoplasmic-facing. Helical transmembrane passes span Ile740–Tyr760, His778–Ala797, Phe801–Gly819, Val833–Leu853, and Leu857–Ala879. The Mitochondrial matrix portion of the chain corresponds to Met880 to Lys1086. Residues Tyr933, Val965–Pro970, Gly1007–Thr1011, Gly1026–Met1027, Lys1042–Tyr1049, and Asp1068–Ala1069 contribute to the NADP(+) site. Lys1079 carries the post-translational modification N6-succinyllysine.

It in the N-terminal section; belongs to the AlaDH/PNT family. In the C-terminal section; belongs to the PNT beta subunit family. Homodimer. In terms of tissue distribution, widely expressed with expression most readily detectable in adrenal, heart, kidney, thyroid and adipose tissues.

Its subcellular location is the mitochondrion inner membrane. It carries out the reaction NAD(+) + NADPH + H(+)(in) = NADH + NADP(+) + H(+)(out). The transhydrogenation between NADH and NADP is coupled to respiration and ATP hydrolysis and functions as a proton pump across the membrane. May play a role in reactive oxygen species (ROS) detoxification in the adrenal gland. This chain is NAD(P) transhydrogenase, mitochondrial (Nnt), found in Mus musculus (Mouse).